A 487-amino-acid polypeptide reads, in one-letter code: Bifunctional protein HldE (487 aa).

Residues 1–326 (MERREVESFF…QEIVAEVGHG (326 aa)) form a ribokinase region. 205–208 (NRKE) is an ATP binding site. Residue Asp-275 is part of the active site. The interval 356-487 (FTNGCFDLLH…RIIEKILSSY (132 aa)) is cytidylyltransferase.

In the N-terminal section; belongs to the carbohydrate kinase PfkB family. The protein in the C-terminal section; belongs to the cytidylyltransferase family. As to quaternary structure, homodimer.

The enzyme catalyses D-glycero-beta-D-manno-heptose 7-phosphate + ATP = D-glycero-beta-D-manno-heptose 1,7-bisphosphate + ADP + H(+). The catalysed reaction is D-glycero-beta-D-manno-heptose 1-phosphate + ATP + H(+) = ADP-D-glycero-beta-D-manno-heptose + diphosphate. It functions in the pathway nucleotide-sugar biosynthesis; ADP-L-glycero-beta-D-manno-heptose biosynthesis; ADP-L-glycero-beta-D-manno-heptose from D-glycero-beta-D-manno-heptose 7-phosphate: step 1/4. The protein operates within nucleotide-sugar biosynthesis; ADP-L-glycero-beta-D-manno-heptose biosynthesis; ADP-L-glycero-beta-D-manno-heptose from D-glycero-beta-D-manno-heptose 7-phosphate: step 3/4. Its function is as follows. Catalyzes the phosphorylation of D-glycero-D-manno-heptose 7-phosphate at the C-1 position to selectively form D-glycero-beta-D-manno-heptose-1,7-bisphosphate. Catalyzes the ADP transfer from ATP to D-glycero-beta-D-manno-heptose 1-phosphate, yielding ADP-D-glycero-beta-D-manno-heptose. The sequence is that of Bifunctional protein HldE from Citrifermentans bemidjiense (strain ATCC BAA-1014 / DSM 16622 / JCM 12645 / Bem) (Geobacter bemidjiensis).